Reading from the N-terminus, the 600-residue chain is MNKLKVTLLASSVVLAATLLSACGSNQSSSTSTKKLKAGNFDVAYQNPDKAIKGGNLKVAYQSDSPMKAQWLSGLSNDATFATMSGPGGGQDGLFFTDSGFKFIKGGAADVALDKESKTATITLRKDLKWSDGSEVTAKDYEFTYETIANPAYGSDRWTDSLANIVGLSDYHAGKAKTISGITFPDGENGKVIKVQFKEMKPGMTQSGNGYFLETVAPYQYLKDVAPKDLASSPKTTTKPLVTGPFKPENVVAGESIKYVPNPYYWGKKPKLNSITYEVVSTAKSVAALSSSKYDFINGMVSSQYKQVKNLKGYKVLGQQAMAISLMYYNLGHYDAKNSINVQDRKTPLQDQNVRQAIGYARNVAEVANKFSNGLSTPANSLIPPIFKQFTSSSVKGYEKQDLDKANKLLDEDGWKLNKSTGYREKDGKELSLVYAAHVGDANAETIAQNYIQQWKKIGVKVSLYNGKLMEFNSWVDHMTTPPGANDWDITDGSWSLASEPSQQDLFSASAPYNFGHFNDSEITKDLNDIDSAKSENPTYRKAAFVKYQEDMNKKAYVVPTNFSLSYTPVNKRVVGMTLDYGAMDTWSEIGVSSAKLATK.

Residues 1–22 (MNKLKVTLLASSVVLAATLLSA) form the signal peptide. The N-palmitoyl cysteine moiety is linked to residue C23. C23 is lipidated: S-diacylglycerol cysteine.

The protein belongs to the bacterial solute-binding protein 5 family. In terms of assembly, the complex is composed of two ATP-binding proteins (OppD and OppF), two transmembrane proteins (OppB and OppC) and a solute-binding protein (OppA).

The protein localises to the cell membrane. Its function is as follows. Part of the ABC transporter complex OppABCDF involved in the uptake of oligopeptides. The polypeptide is Oligopeptide-binding protein OppA (Lactococcus lactis subsp. cremoris (strain SK11)).